Consider the following 967-residue polypeptide: Leucine--tRNA ligase (967 aa).

The 'HIGH' region signature appears at 43-53 (PYLSGHLHVGH). The 'KMSKS' region motif lies at 650 to 654 (KMSKS). Lysine 653 is a binding site for ATP.

It belongs to the class-I aminoacyl-tRNA synthetase family.

It is found in the cytoplasm. The catalysed reaction is tRNA(Leu) + L-leucine + ATP = L-leucyl-tRNA(Leu) + AMP + diphosphate. The chain is Leucine--tRNA ligase from Thermococcus kodakarensis (strain ATCC BAA-918 / JCM 12380 / KOD1) (Pyrococcus kodakaraensis (strain KOD1)).